A 430-amino-acid chain; its full sequence is Sesquiterpene synthase Agr5 (430 aa).

Positions 1 to 25 (MASSLLEPSLAAIALVILLASVSLS) are cleaved as a signal peptide. N-linked (GlcNAc...) asparagine glycosylation occurs at Asn-113. Positions 176, 311, 315, and 319 each coordinate Mg(2+). Positions 176 to 180 (DEYTD) match the DDXXD motif motif. 2 residues coordinate (2E,6E)-farnesyl diphosphate: Arg-401 and Tyr-402.

The protein belongs to the terpene synthase family. Requires Mg(2+) as cofactor.

It carries out the reaction (2E,6E)-farnesyl diphosphate = viridiflorene + diphosphate. In terms of biological role, terpene cyclase that catalyzes the cyclization of farnesyl diphosphate (FPP) to viridiflorene and viridiflorol. This Cyclocybe aegerita (Black poplar mushroom) protein is Sesquiterpene synthase Agr5.